We begin with the raw amino-acid sequence, 83 residues long: uncharacterized protein (83 aa).

This is an uncharacterized protein from Acidianus bottle-shaped virus (isolate Italy/Pozzuoli) (ABV).